The following is a 288-amino-acid chain: ATP synthase gamma chain (288 aa).

This sequence belongs to the ATPase gamma chain family. As to quaternary structure, F-type ATPases have 2 components, CF(1) - the catalytic core - and CF(0) - the membrane proton channel. CF(1) has five subunits: alpha(3), beta(3), gamma(1), delta(1), epsilon(1). CF(0) has three main subunits: a, b and c.

It localises to the cell inner membrane. Its function is as follows. Produces ATP from ADP in the presence of a proton gradient across the membrane. The gamma chain is believed to be important in regulating ATPase activity and the flow of protons through the CF(0) complex. The protein is ATP synthase gamma chain of Glaesserella parasuis serovar 5 (strain SH0165) (Haemophilus parasuis).